Consider the following 22-residue polypeptide: thr operon leader peptide (22 aa).

Belongs to the thr operon leader peptide family.

This protein is involved in control of the biosynthesis of threonine. In Yersinia pestis bv. Antiqua (strain Antiqua), this protein is thr operon leader peptide.